The chain runs to 238 residues: Probable phosphatase phospho2 (238 aa).

The Nucleophile role is filled by Asp-8. Mg(2+) is bound by residues Asp-8 and Asp-10. Asp-10 acts as the Proton donor in catalysis. Substrate contacts are provided by Asp-19 and Asp-99. Asp-179 lines the Mg(2+) pocket.

The protein belongs to the HAD-like hydrolase superfamily. PHOSPHO family. Mg(2+) is required as a cofactor.

Functionally, probable phosphatase. The sequence is that of Probable phosphatase phospho2 (phospho2) from Xenopus tropicalis (Western clawed frog).